A 61-amino-acid polypeptide reads, in one-letter code: Small ribosomal subunit protein uS14 (61 aa).

Residues Cys24, Cys27, Cys40, and Cys43 each coordinate Zn(2+).

This sequence belongs to the universal ribosomal protein uS14 family. Zinc-binding uS14 subfamily. As to quaternary structure, part of the 30S ribosomal subunit. Contacts proteins S3 and S10. The cofactor is Zn(2+).

In terms of biological role, binds 16S rRNA, required for the assembly of 30S particles and may also be responsible for determining the conformation of the 16S rRNA at the A site. The chain is Small ribosomal subunit protein uS14 from Symbiobacterium thermophilum (strain DSM 24528 / JCM 14929 / IAM 14863 / T).